The following is a 355-amino-acid chain: Small ribosomal subunit protein uS2 (355 aa).

It belongs to the universal ribosomal protein uS2 family.

The polypeptide is Small ribosomal subunit protein uS2 (Methylobacterium radiotolerans (strain ATCC 27329 / DSM 1819 / JCM 2831 / NBRC 15690 / NCIMB 10815 / 0-1)).